The following is a 226-amino-acid chain: Reticulon-like protein B16 (226 aa).

Residues 41 to 224 enclose the Reticulon domain; sequence AADLLLWRRR…RLSWSLSKDK (184 aa). A run of 3 helical transmembrane segments spans residues 54–74, 75–95, and 149–169; these read LGVIIISTVAWLIFEFSGLPF, LSVSSDVLLIVIMISFVHARV, and VVICLWLLSAIGSYISLCTLL.

It is found in the endoplasmic reticulum membrane. The sequence is that of Reticulon-like protein B16 (RTNLB16) from Arabidopsis thaliana (Mouse-ear cress).